A 161-amino-acid chain; its full sequence is MKGEPKVIERLNDALFLELGAVNQYWLHYRLLNDWGYTRLAKKEREESIEEMHHADKLINRIIFFEGFPNLQTVSPLRIGQNVKEVLEADLKGEYDARASYKESREICDKLGDYVSKQLFDELLADEEGHIDFLETQLDLLAKIGEERYGQLNAAPADEAE.

A Ferritin-like diiron domain is found at 1 to 145; that stretch reads MKGEPKVIER…TQLDLLAKIG (145 aa). Fe cation contacts are provided by Glu18 and Glu51. Met52 provides a ligand contact to heme b. The Fe cation site is built by His54, Glu94, Glu127, and His130.

The protein belongs to the bacterioferritin family. As to quaternary structure, homooligomer of 24 subunits, arranged as 12 dimers, that are packed together to form an approximately spherical molecule with a central cavity, in which large amounts of iron can be deposited. Heme b is required as a cofactor.

The catalysed reaction is 4 Fe(2+) + O2 + 4 H(+) = 4 Fe(3+) + 2 H2O. The enzyme catalyses Fe(2+)(in) = Fe(2+)(out). Functionally, iron-storage protein, whose ferroxidase center binds Fe(2+), oxidizes it using dioxygen to Fe(3+), and participates in the subsequent Fe(3+) oxide mineral core formation within the central cavity of the BFR protein shell. This Brucella melitensis biotype 1 (strain ATCC 23456 / CCUG 17765 / NCTC 10094 / 16M) protein is Bacterioferritin (bfr).